The chain runs to 138 residues: Enhancer of split malpha protein (138 aa).

The protein belongs to the M4-like protein family.

Functionally, part of the Notch signaling pathway. This Drosophila melanogaster (Fruit fly) protein is Enhancer of split malpha protein.